Here is a 391-residue protein sequence, read N- to C-terminus: Elongation factor Tu (391 aa).

In terms of domain architecture, tr-type G spans 10–201 (KPHVNIGTIG…EVDKYIPTPE (192 aa)). The segment at 19-26 (GHVDHGKT) is G1. 19 to 26 (GHVDHGKT) is a binding site for GTP. Thr-26 is a Mg(2+) binding site. Residues 55–59 (GITIS) are G2. The segment at 76–79 (DCPG) is G3. Residues 76–80 (DCPGH) and 131–134 (NKVD) each bind GTP. The G4 stretch occupies residues 131 to 134 (NKVD). Positions 169 to 171 (SAL) are G5.

The protein belongs to the TRAFAC class translation factor GTPase superfamily. Classic translation factor GTPase family. EF-Tu/EF-1A subfamily. In terms of assembly, monomer.

Its subcellular location is the cytoplasm. It catalyses the reaction GTP + H2O = GDP + phosphate + H(+). Its function is as follows. GTP hydrolase that promotes the GTP-dependent binding of aminoacyl-tRNA to the A-site of ribosomes during protein biosynthesis. The chain is Elongation factor Tu from Chelativorans sp. (strain BNC1).